The chain runs to 311 residues: Aquaporin NIP3-1 (311 aa).

A disordered region spans residues 1 to 34 (MEMAAPNGGGAAGMSSPVNGASAPATPGTPAPLF). Positions 20–34 (GASAPATPGTPAPLF) are enriched in low complexity. The next 2 helical transmembrane spans lie at 85-105 (LGAEFVGTFILIFFATAAPIV) and 111-131 (GAISPFGNAACAGLAVTTIIL). The NPA 1 motif lies at 142 to 144 (NPS). 3 helical membrane-spanning segments follow: residues 158–178 (LQVPAYVAVQVLGSICAGFAL), 202–222 (AFFTEFIITFNLLFVVTAVAT), and 226–246 (AVGELAGIAVGAAVTLNILIA). The NPA 2 signature appears at 255-257 (NPV). The chain crosses the membrane as a helical span at residues 273 to 293 (WIYLIAPTLGAVAGAGVYTAV).

It belongs to the MIP/aquaporin (TC 1.A.8) family. NIP (TC 1.A.8.12) subfamily. As to expression, expressed in roots and leaves.

Its subcellular location is the membrane. In terms of biological role, aquaporins facilitate the transport of water and small neutral solutes across cell membranes. This is Aquaporin NIP3-1 (NIP3-1) from Oryza sativa subsp. japonica (Rice).